A 498-amino-acid chain; its full sequence is DELTA-thalatoxin-Avl2a (498 aa).

Residues 1–22 (MSPYFKLSSALIFLAITMEALC) form the signal peptide. Residues 23–35 (SPIENTSTSNKDN) constitute a propeptide that is removed on maturation. Residues 23-359 (SPIENTSTSN…GFLHFGCSFL (337 aa)) enclose the MACPF domain. Residues 135–159 (AAVTNNIASSEEEVQGLSLNLKAYS) are a coiled coil. Cystine bridges form between cysteine 389/cysteine 402, cysteine 396/cysteine 410, and cysteine 412/cysteine 422. Positions 410–422 (CECGGPYDLARTC) constitute an EGF-like domain.

The protein resides in the secreted. The protein localises to the nematocyst. In terms of biological role, is lethal to mice, and may cause hemolytic activity. This is DELTA-thalatoxin-Avl2a from Actineria villosa (Okinawan sea anemone).